The chain runs to 230 residues: Ribonuclease 3 (230 aa).

The RNase III domain occupies 1 to 134; it reads MKQLEELLST…FLGALLLDKG (134 aa). Residue Glu-47 coordinates Mg(2+). Asp-51 is a catalytic residue. Mg(2+) contacts are provided by Asp-120 and Glu-123. The active site involves Glu-123. Residues 160 to 229 form the DRBM domain; the sequence is DYKTCLQEFL…AKNALAQLSE (70 aa).

The protein belongs to the ribonuclease III family. In terms of assembly, homodimer. Requires Mg(2+) as cofactor.

It localises to the cytoplasm. The enzyme catalyses Endonucleolytic cleavage to 5'-phosphomonoester.. In terms of biological role, digests double-stranded RNA. Involved in the processing of primary rRNA transcript to yield the immediate precursors to the large and small rRNAs (23S and 16S). Processes some mRNAs, and tRNAs when they are encoded in the rRNA operon. Processes pre-crRNA and tracrRNA of type II CRISPR loci if present in the organism. The chain is Ribonuclease 3 from Streptococcus pyogenes serotype M3 (strain SSI-1).